Reading from the N-terminus, the 240-residue chain is Small ribosomal subunit protein uS2 (240 aa).

It belongs to the universal ribosomal protein uS2 family.

In Haemophilus influenzae (strain 86-028NP), this protein is Small ribosomal subunit protein uS2.